A 142-amino-acid polypeptide reads, in one-letter code: Regulatory protein RecX (142 aa).

The protein belongs to the RecX family.

It localises to the cytoplasm. Modulates RecA activity. The chain is Regulatory protein RecX from Thermus thermophilus (strain ATCC BAA-163 / DSM 7039 / HB27).